Reading from the N-terminus, the 428-residue chain is GTPase Obg (428 aa).

The 158-residue stretch at 1-158 (MFVDQVKIYV…RDVILELKVL (158 aa)) folds into the Obg domain. The OBG-type G domain occupies 159 to 329 (ADVGLVGFPS…LLFEVANLIE (171 aa)). GTP-binding positions include 165–172 (GFPSVGKS), 190–194 (FTTIV), 212–215 (DLPG), 282–285 (NKMD), and 310–312 (SAV). Residues serine 172 and threonine 192 each contribute to the Mg(2+) site. Positions 350–428 (KFETEGVKFD…ILEYEFEFID (79 aa)) constitute an OCT domain.

It belongs to the TRAFAC class OBG-HflX-like GTPase superfamily. OBG GTPase family. As to quaternary structure, monomer. Requires Mg(2+) as cofactor.

It is found in the cytoplasm. Its function is as follows. An essential GTPase which binds GTP, GDP and possibly (p)ppGpp with moderate affinity, with high nucleotide exchange rates and a fairly low GTP hydrolysis rate. Plays a role in control of the cell cycle, stress response, ribosome biogenesis and in those bacteria that undergo differentiation, in morphogenesis control. The sequence is that of GTPase Obg from Bacillus cereus (strain AH820).